Reading from the N-terminus, the 273-residue chain is Formamidopyrimidine-DNA glycosylase (273 aa).

Proline 2 functions as the Schiff-base intermediate with DNA in the catalytic mechanism. The active-site Proton donor is glutamate 3. Residue lysine 57 is the Proton donor; for beta-elimination activity of the active site. Residues histidine 90, arginine 109, and lysine 150 each coordinate DNA. The FPG-type zinc-finger motif lies at 235–269 (KVYGRAGKECPVCSSKIEEEKIGQRNSFWCGKCQF). Residue arginine 259 is the Proton donor; for delta-elimination activity of the active site.

The protein belongs to the FPG family. Monomer. Zn(2+) is required as a cofactor.

It carries out the reaction Hydrolysis of DNA containing ring-opened 7-methylguanine residues, releasing 2,6-diamino-4-hydroxy-5-(N-methyl)formamidopyrimidine.. The enzyme catalyses 2'-deoxyribonucleotide-(2'-deoxyribose 5'-phosphate)-2'-deoxyribonucleotide-DNA = a 3'-end 2'-deoxyribonucleotide-(2,3-dehydro-2,3-deoxyribose 5'-phosphate)-DNA + a 5'-end 5'-phospho-2'-deoxyribonucleoside-DNA + H(+). Its function is as follows. Involved in base excision repair of DNA damaged by oxidation or by mutagenic agents. Acts as a DNA glycosylase that recognizes and removes damaged bases. Has a preference for oxidized purines, such as 7,8-dihydro-8-oxoguanine (8-oxoG). Has AP (apurinic/apyrimidinic) lyase activity and introduces nicks in the DNA strand. Cleaves the DNA backbone by beta-delta elimination to generate a single-strand break at the site of the removed base with both 3'- and 5'-phosphates. The protein is Formamidopyrimidine-DNA glycosylase of Aliivibrio fischeri (strain MJ11) (Vibrio fischeri).